Here is a 267-residue protein sequence, read N- to C-terminus: Non-homologous end joining protein Ku (267 aa).

Positions 11-195 (AVGQVSCAVA…KVKGEMLELA (185 aa)) constitute a Ku domain. Residues 229–267 (GRKPKRKAAPKKAREPSDLMAALRESVAATERPRRRKAG) form a disordered region.

Belongs to the prokaryotic Ku family. In terms of assembly, homodimer. Interacts with LigD.

Functionally, with LigD forms a non-homologous end joining (NHEJ) DNA repair enzyme, which repairs dsDNA breaks with reduced fidelity. Binds linear dsDNA with 5'- and 3'- overhangs but not closed circular dsDNA nor ssDNA. Recruits and stimulates the ligase activity of LigD. This chain is Non-homologous end joining protein Ku, found in Cereibacter sphaeroides (strain KD131 / KCTC 12085) (Rhodobacter sphaeroides).